A 382-amino-acid chain; its full sequence is 1-deoxy-D-xylulose 5-phosphate reductoisomerase (382 aa).

NADPH is bound by residues serine 10, glycine 11, serine 12, isoleucine 13, glycine 36, lysine 37, asparagine 38, and asparagine 121. Residue lysine 122 coordinates 1-deoxy-D-xylulose 5-phosphate. Glutamate 123 contributes to the NADPH binding site. A Mn(2+)-binding site is contributed by aspartate 147. 1-deoxy-D-xylulose 5-phosphate-binding residues include serine 148, glutamate 149, serine 173, and histidine 196. Glutamate 149 provides a ligand contact to Mn(2+). Glycine 202 contributes to the NADPH binding site. Residues serine 209, asparagine 214, lysine 215, and glutamate 218 each contribute to the 1-deoxy-D-xylulose 5-phosphate site. Glutamate 218 provides a ligand contact to Mn(2+).

The protein belongs to the DXR family. The cofactor is Mg(2+). It depends on Mn(2+) as a cofactor.

It carries out the reaction 2-C-methyl-D-erythritol 4-phosphate + NADP(+) = 1-deoxy-D-xylulose 5-phosphate + NADPH + H(+). Its pathway is isoprenoid biosynthesis; isopentenyl diphosphate biosynthesis via DXP pathway; isopentenyl diphosphate from 1-deoxy-D-xylulose 5-phosphate: step 1/6. In terms of biological role, catalyzes the NADPH-dependent rearrangement and reduction of 1-deoxy-D-xylulose-5-phosphate (DXP) to 2-C-methyl-D-erythritol 4-phosphate (MEP). This chain is 1-deoxy-D-xylulose 5-phosphate reductoisomerase, found in Geobacillus kaustophilus (strain HTA426).